Reading from the N-terminus, the 250-residue chain is Ubiquinone/menaquinone biosynthesis C-methyltransferase UbiE (250 aa).

S-adenosyl-L-methionine contacts are provided by residues serine 73, aspartate 94, and 122–123; that span reads NA.

The protein belongs to the class I-like SAM-binding methyltransferase superfamily. MenG/UbiE family.

It catalyses the reaction a 2-demethylmenaquinol + S-adenosyl-L-methionine = a menaquinol + S-adenosyl-L-homocysteine + H(+). The enzyme catalyses a 2-methoxy-6-(all-trans-polyprenyl)benzene-1,4-diol + S-adenosyl-L-methionine = a 5-methoxy-2-methyl-3-(all-trans-polyprenyl)benzene-1,4-diol + S-adenosyl-L-homocysteine + H(+). It functions in the pathway quinol/quinone metabolism; menaquinone biosynthesis; menaquinol from 1,4-dihydroxy-2-naphthoate: step 2/2. The protein operates within cofactor biosynthesis; ubiquinone biosynthesis. Its function is as follows. Methyltransferase required for the conversion of demethylmenaquinol (DMKH2) to menaquinol (MKH2) and the conversion of 2-polyprenyl-6-methoxy-1,4-benzoquinol (DDMQH2) to 2-polyprenyl-3-methyl-6-methoxy-1,4-benzoquinol (DMQH2). The chain is Ubiquinone/menaquinone biosynthesis C-methyltransferase UbiE from Legionella pneumophila subsp. pneumophila (strain Philadelphia 1 / ATCC 33152 / DSM 7513).